The chain runs to 573 residues: Acetolactate synthase large subunit (573 aa).

Glu51 contacts thiamine diphosphate. FAD is bound by residues Arg153, 261–282, and 304–323; these read HGTL…IGVR and DIDP…IVGN. The tract at residues 396–476 is thiamine pyrophosphate binding; sequence QHQMFAALHY…VVIICLNNHF (81 aa). 2 residues coordinate Mg(2+): Asp447 and Asn474.

The protein belongs to the TPP enzyme family. As to quaternary structure, dimer of large and small chains. Mg(2+) serves as cofactor. Requires thiamine diphosphate as cofactor.

The enzyme catalyses 2 pyruvate + H(+) = (2S)-2-acetolactate + CO2. It participates in amino-acid biosynthesis; L-isoleucine biosynthesis; L-isoleucine from 2-oxobutanoate: step 1/4. The protein operates within amino-acid biosynthesis; L-valine biosynthesis; L-valine from pyruvate: step 1/4. The sequence is that of Acetolactate synthase large subunit (ilvI) from Haemophilus influenzae (strain ATCC 51907 / DSM 11121 / KW20 / Rd).